A 1238-amino-acid chain; its full sequence is ATP-dependent helicase/nuclease subunit A (1238 aa).

The region spanning 12-490 (VSWTDDQWKA…IDLNANFRSR (479 aa)) is the UvrD-like helicase ATP-binding domain. 33 to 40 (AAAGSGKT) contacts ATP. The UvrD-like helicase C-terminal domain occupies 510–818 (GEILYDDNAS…RLVTIHSSKG (309 aa)).

The protein belongs to the helicase family. AddA subfamily. As to quaternary structure, heterodimer of AddA and AddB/RexB. Requires Mg(2+) as cofactor.

It catalyses the reaction Couples ATP hydrolysis with the unwinding of duplex DNA by translocating in the 3'-5' direction.. The catalysed reaction is ATP + H2O = ADP + phosphate + H(+). The heterodimer acts as both an ATP-dependent DNA helicase and an ATP-dependent, dual-direction single-stranded exonuclease. Recognizes the chi site generating a DNA molecule suitable for the initiation of homologous recombination. The AddA nuclease domain is required for chi fragment generation; this subunit has the helicase and 3' -&gt; 5' nuclease activities. The polypeptide is ATP-dependent helicase/nuclease subunit A (Lysinibacillus sphaericus (strain C3-41)).